The sequence spans 65 residues: Venom protein Vn4.6 (65 aa).

Residues 1–23 (MSKIILAIFLIVLCGLIFVTVDA) form the signal peptide.

Post-translationally, contains 2 disulfide bonds. Expressed by the venom gland.

The protein resides in the secreted. Functionally, endoparasitoid venom protein that interferes with the activation of host hemolymph prophenoloxidase. May act in conjunction with other venom proteins (such as Vn50), by competitive binding to the zymogen and thereby interrupting the enzyme. This is Venom protein Vn4.6 from Cotesia rubecula (Cabbage white butterfly parasite).